Reading from the N-terminus, the 613-residue chain is Phosphomethylpyrimidine synthase (613 aa).

Substrate is bound by residues N215, M244, Y273, H309, 329–331 (SRG), 370–373 (DGLR), and E409. Residue H413 participates in Zn(2+) binding. Substrate is bound at residue Y436. H477 serves as a coordination point for Zn(2+). C557, C560, and C565 together coordinate [4Fe-4S] cluster.

It belongs to the ThiC family. In terms of assembly, homodimer. [4Fe-4S] cluster serves as cofactor.

The catalysed reaction is 5-amino-1-(5-phospho-beta-D-ribosyl)imidazole + S-adenosyl-L-methionine = 4-amino-2-methyl-5-(phosphooxymethyl)pyrimidine + CO + 5'-deoxyadenosine + formate + L-methionine + 3 H(+). It participates in cofactor biosynthesis; thiamine diphosphate biosynthesis. Functionally, catalyzes the synthesis of the hydroxymethylpyrimidine phosphate (HMP-P) moiety of thiamine from aminoimidazole ribotide (AIR) in a radical S-adenosyl-L-methionine (SAM)-dependent reaction. The polypeptide is Phosphomethylpyrimidine synthase (Paramagnetospirillum magneticum (strain ATCC 700264 / AMB-1) (Magnetospirillum magneticum)).